Reading from the N-terminus, the 207-residue chain is Large ribosomal subunit protein bL25 (207 aa).

This sequence belongs to the bacterial ribosomal protein bL25 family. CTC subfamily. In terms of assembly, part of the 50S ribosomal subunit; part of the 5S rRNA/L5/L18/L25 subcomplex. Contacts the 5S rRNA. Binds to the 5S rRNA independently of L5 and L18.

Functionally, this is one of the proteins that binds to the 5S RNA in the ribosome where it forms part of the central protuberance. The sequence is that of Large ribosomal subunit protein bL25 from Orientia tsutsugamushi (strain Ikeda) (Rickettsia tsutsugamushi).